A 798-amino-acid polypeptide reads, in one-letter code: Suppressor of spindle checkpoint defect 1 (798 aa).

Residues 339 to 359 adopt a coiled-coil conformation; that stretch reads ESIQQSQVNVDDMCNRIANME.

Belongs to the APC5 family. In terms of assembly, the APC/C complex is probably composed of at least 12 subunits: apc-2, apc-10, apc-11, cdc-26, emb-1, emb-27, emb-30, mat-1, mat-2, mat-3, such-1 and gfi-3. As to expression, expressed in head neurons, vulval precursor cells and in mature sperm stored in the spermatheca.

Its pathway is protein modification; protein ubiquitination. Functionally, probable component of the anaphase promoting complex/cyclosome (APC/C), a cell cycle-regulated E3 ubiquitin ligase that controls progression through mitosis and the G1 phase of the cell cycle. The APC/C complex acts by mediating ubiquitination and subsequent degradation of target proteins. Required for the metaphase to anaphase transition in meiosis. Plays a role in the segregation of DNA and centrioles during meiosis in male germ cells. In Caenorhabditis elegans, this protein is Suppressor of spindle checkpoint defect 1.